The sequence spans 296 residues: 4-hydroxy-tetrahydrodipicolinate synthase (296 aa).

Position 50 (threonine 50) interacts with pyruvate. Tyrosine 138 serves as the catalytic Proton donor/acceptor. Lysine 166 serves as the catalytic Schiff-base intermediate with substrate. Pyruvate is bound at residue isoleucine 208.

This sequence belongs to the DapA family. As to quaternary structure, homotetramer; dimer of dimers.

The protein resides in the cytoplasm. It carries out the reaction L-aspartate 4-semialdehyde + pyruvate = (2S,4S)-4-hydroxy-2,3,4,5-tetrahydrodipicolinate + H2O + H(+). The protein operates within amino-acid biosynthesis; L-lysine biosynthesis via DAP pathway; (S)-tetrahydrodipicolinate from L-aspartate: step 3/4. Catalyzes the condensation of (S)-aspartate-beta-semialdehyde [(S)-ASA] and pyruvate to 4-hydroxy-tetrahydrodipicolinate (HTPA). This is 4-hydroxy-tetrahydrodipicolinate synthase from Thiobacillus denitrificans (strain ATCC 25259 / T1).